Consider the following 122-residue polypeptide: Large ribosomal subunit protein uL14 (122 aa).

It belongs to the universal ribosomal protein uL14 family. Part of the 50S ribosomal subunit. Forms a cluster with proteins L3 and L19. In the 70S ribosome, L14 and L19 interact and together make contacts with the 16S rRNA in bridges B5 and B8.

Functionally, binds to 23S rRNA. Forms part of two intersubunit bridges in the 70S ribosome. This is Large ribosomal subunit protein uL14 from Desulfitobacterium hafniense (strain DSM 10664 / DCB-2).